The chain runs to 868 residues: DNA mismatch repair protein MutS (868 aa).

620–627 (GPNMGGKS) is a binding site for ATP.

It belongs to the DNA mismatch repair MutS family.

This protein is involved in the repair of mismatches in DNA. It is possible that it carries out the mismatch recognition step. This protein has a weak ATPase activity. The chain is DNA mismatch repair protein MutS from Desulforamulus reducens (strain ATCC BAA-1160 / DSM 100696 / MI-1) (Desulfotomaculum reducens).